We begin with the raw amino-acid sequence, 120 residues long: Large ribosomal subunit protein uL18 (120 aa).

Residues 1 to 24 (MITKAAKNATRKKRHARVRAKLTG) form a disordered region. The span at 9–20 (ATRKKRHARVRA) shows a compositional bias: basic residues.

It belongs to the universal ribosomal protein uL18 family. In terms of assembly, part of the 50S ribosomal subunit; part of the 5S rRNA/L5/L18/L25 subcomplex. Contacts the 5S and 23S rRNAs.

Its function is as follows. This is one of the proteins that bind and probably mediate the attachment of the 5S RNA into the large ribosomal subunit, where it forms part of the central protuberance. This chain is Large ribosomal subunit protein uL18, found in Bacillus mycoides (strain KBAB4) (Bacillus weihenstephanensis).